The sequence spans 245 residues: Uridylate kinase (245 aa).

Position 12 to 15 (12 to 15 (KLSG)) interacts with ATP. Residues 20–25 (GEKGVG) form an involved in allosteric activation by GTP region. G54 serves as a coordination point for UMP. ATP-binding residues include G55 and R59. UMP is bound by residues D74 and 135–142 (VGSPYFST). The ATP site is built by N163, Y169, and D172.

Belongs to the UMP kinase family. In terms of assembly, homohexamer.

It is found in the cytoplasm. It carries out the reaction UMP + ATP = UDP + ADP. The protein operates within pyrimidine metabolism; CTP biosynthesis via de novo pathway; UDP from UMP (UMPK route): step 1/1. With respect to regulation, allosterically activated by GTP. Inhibited by UTP. Catalyzes the reversible phosphorylation of UMP to UDP. This is Uridylate kinase from Streptococcus mutans serotype c (strain ATCC 700610 / UA159).